We begin with the raw amino-acid sequence, 400 residues long: Glycerol-3-phosphate dehydrogenase [NAD(+)] 1, chloroplastic (400 aa).

A chloroplast-targeting transit peptide spans 1 to 32 (MRFRSFFFSSSIFSLSHSRSPSLSSSRFSSLS). NAD(+)-binding positions include 61-66 (GSGNWG), Phe92, Phe149, Lys172, and Ala205. Lys172 contributes to the substrate binding site. Lys257 acts as the Proton acceptor in catalysis. Residues Arg321, Lys350, and Gln352 each contribute to the NAD(+) site. 321–322 (RN) is a binding site for substrate.

Belongs to the NAD-dependent glycerol-3-phosphate dehydrogenase family. Expressed in young seedlings, flowers and siliques. Expressed at low levels in roots.

The protein resides in the plastid. Its subcellular location is the chloroplast. The catalysed reaction is sn-glycerol 3-phosphate + NAD(+) = dihydroxyacetone phosphate + NADH + H(+). It participates in membrane lipid metabolism; glycerophospholipid metabolism. Functionally, involved in glycerolipid metabolism. The polypeptide is Glycerol-3-phosphate dehydrogenase [NAD(+)] 1, chloroplastic (DHAPRD) (Arabidopsis thaliana (Mouse-ear cress)).